We begin with the raw amino-acid sequence, 1994 residues long: Protein-methionine sulfoxide oxidase mical3a (1994 aa).

Residues 2-498 are monooxygenase domain; it reads GDGGVNAVGE…RHLLDTGETR (497 aa). FAD is bound by residues cysteine 101, 101-129, glutamate 120, arginine 122, arginine 127, asparagine 129, and aspartate 402; that span reads CGLR…SRNN. Residues 521-627 enclose the Calponin-homology (CH) domain; sequence IVRSSKLLNW…YLSQFYEMFK (107 aa). The segment at 666–708 is disordered; it reads ISRKRNPKDKKEKELDGLGKRRKTSQAGQSEDEELQRANRDDR. A compositionally biased stretch (basic and acidic residues) spans 674–684; sequence DKKEKELDGLG. Residues 772 to 834 form the LIM zinc-binding domain; it reads DVCFFCRKRV…KPHYCYRLSG (63 aa). 6 disordered regions span residues 843-900, 917-1064, 1176-1263, 1281-1476, 1493-1555, and 1598-1747; these read PAAA…LKGT, EELE…AEAR, SQPV…ELKK, LGLT…REEV, VEDT…SPEA, and KVAW…LRLR. 2 stretches are compositionally biased toward acidic residues: residues 917–926 and 951–961; these read EELEEVPEET and SDMEEEDEDAE. Residues 975-987 show a composition bias toward basic and acidic residues; that stretch reads EAVELHAKLKGES. Acidic residues-rich tracts occupy residues 1001–1037 and 1046–1060; these read GEMD…DPEA and PGTE…SDAE. Residues 1200–1215 show a composition bias toward polar residues; the sequence is PTGNPLSPICTQSQPC. Basic and acidic residues-rich tracts occupy residues 1249-1263 and 1287-1297; these read RTNE…ELKK and ERSKTAVEKSI. Composition is skewed to low complexity over residues 1299–1314 and 1358–1368; these read KTPT…YTPE and SSSSGLGLNGS. Residues 1369–1389 show a composition bias toward polar residues; the sequence is VTTSQTAASDSYNNSDSTMLT. The segment covering 1437-1458 has biased composition (pro residues); sequence PVSPPQPKQKPVTAPVPTPRTN. Over residues 1464–1476 the composition is skewed to basic and acidic residues; the sequence is RVKEPNKPRREEV. The segment covering 1616–1635 has biased composition (basic and acidic residues); it reads AQKDSAVKALESKKQADTLP. Residues 1649 to 1660 show a composition bias toward low complexity; the sequence is SSVTSSESSTGG. Over residues 1661–1679 the composition is skewed to basic residues; it reads KSKKRSSLFSPRKNKKEKK. Positions 1680–1693 are enriched in basic and acidic residues; sequence AKNERLSSTEETPP. Residues 1718-1729 show a composition bias toward low complexity; it reads CPSTPSSSTTGD. The span at 1730–1746 shows a compositional bias: basic and acidic residues; the sequence is SGKKKDSPLDRSSDLRL. Coiled-coil stretches lie at residues 1796–1855 and 1894–1960; these read EEEL…KALR and QEKN…EQRD. The bMERB domain maps to 1816 to 1982; that stretch reads KQEELKRLHR…EKEEDKDLEA (167 aa).

This sequence belongs to the Mical family. FAD is required as a cofactor.

The protein resides in the cytoplasm. Its subcellular location is the cytoskeleton. It is found in the nucleus. The catalysed reaction is L-methionyl-[F-actin] + NADPH + O2 + H(+) = L-methionyl-(R)-S-oxide-[F-actin] + NADP(+) + H2O. In terms of biological role, monooxygenase that promotes depolymerization of F-actin by mediating oxidation of specific methionine residues on actin. Acts by modifying actin subunits through the addition of oxygen to form methionine-sulfoxide, leading to promote actin filament severing and prevent repolymerization. Involved in exocytic vesicles tethering and fusion: the monooxygenase activity is required for this process. The sequence is that of Protein-methionine sulfoxide oxidase mical3a (mical3a) from Danio rerio (Zebrafish).